The sequence spans 236 residues: Diaminopimelate epimerase (236 aa).

Residues Asn8 and Asn55 each coordinate substrate. The Proton donor role is filled by Cys64. Substrate-binding positions include 65-66 (GN), Asn159, and 176-177 (ER). Cys186 (proton acceptor) is an active-site residue. Position 187-188 (187-188 (GT)) interacts with substrate.

It belongs to the diaminopimelate epimerase family. Probably forms homotrimers.

It is found in the cytoplasm. The enzyme catalyses (2S,6S)-2,6-diaminopimelate = meso-2,6-diaminopimelate. The protein operates within amino-acid biosynthesis; L-lysine biosynthesis via DAP pathway; DL-2,6-diaminopimelate from LL-2,6-diaminopimelate: step 1/1. In terms of biological role, catalyzes the stereoinversion of LL-2,6-diaminopimelate (L,L-DAP) to meso-diaminopimelate (meso-DAP), a precursor of L-lysine and an essential component of the bacterial peptidoglycan. Also catalyzes the racemization of certain amino acids, including Lys, with low efficiency. The polypeptide is Diaminopimelate epimerase (Thermotoga maritima (strain ATCC 43589 / DSM 3109 / JCM 10099 / NBRC 100826 / MSB8)).